We begin with the raw amino-acid sequence, 822 residues long: Fibroblast growth factor receptor 1 (822 aa).

The first 21 residues, 1-21, serve as a signal peptide directing secretion; sequence MWGWRGLLFWAVLVTATLCTA. Residues 22 to 376 are Extracellular-facing; the sequence is RPAPTLPEQA…AVMTSPLYLE (355 aa). The Ig-like C2-type 1 domain occupies 25–119; the sequence is PTLPEQAQPW…DTTYFSVNVS (95 aa). Cysteines 55 and 101 form a disulfide. N77 and N117 each carry an N-linked (GlcNAc...) asparagine glycan. Residues 120 to 162 form a disordered region; that stretch reads DALPSSEDDDDDDDSSSEEKETDNTKPNRRPVAPYWTSPEKME. The span at 125 to 135 shows a compositional bias: acidic residues; the sequence is SEDDDDDDDSS. The segment covering 136-145 has biased composition (basic and acidic residues); that stretch reads SEEKETDNTK. 2 consecutive Ig-like C2-type domains span residues 158-246 and 255-357; these read PEKM…YQLD and PILQ…AWLT. The tract at residues 160–177 is heparin-binding; that stretch reads KMEKKLHAVPAAKTVKFK. An intrachain disulfide couples C178 to C230. N227, N240, N264, N296, N317, and N330 each carry an N-linked (GlcNAc...) asparagine glycan. An intrachain disulfide couples C277 to C341. The helical transmembrane segment at 377–397 threads the bilayer; it reads IIIYCTGAFLISCMVGSVIIY. At 398–822 the chain is on the cytoplasmic side; the sequence is KMKSGTKKSD…QLANGGLNRR (425 aa). Residue Y463 is modified to Phosphotyrosine; by autocatalysis. One can recognise a Protein kinase domain in the interval 478 to 767; it reads LVLGKPLGEG…VALTSNQEYL (290 aa). ATP is bound by residues 484–490, K514, 562–564, and N568; these read LGEGCFG and EYA. Phosphotyrosine; by autocatalysis is present on residues Y583 and Y585. The active-site Proton acceptor is D623. 2 residues coordinate ATP: R627 and D641. Phosphotyrosine; by autocatalysis is present on residues Y653, Y654, Y730, and Y766. The disordered stretch occupies residues 770–822; the sequence is SMPLDQDSPSFPDTRSSTCSSGEDSVFSHEPFPEEPCLPRHPTQLANGGLNRR. A compositionally biased stretch (polar residues) spans 776–792; that stretch reads DSPSFPDTRSSTCSSGE.

Belongs to the protein kinase superfamily. Tyr protein kinase family. Fibroblast growth factor receptor subfamily. In terms of assembly, monomer. Homodimer after ligand binding. Interacts predominantly with FGF1 and FGF2, but can also interact with FGF3, FGF4, FGF5, FGF6, FGF8, FGF10, FGF19, FGF21, FGF22 and FGF23 (in vitro). Ligand specificity is determined by tissue-specific expression of isoforms, and differences in the third Ig-like domain are crucial for ligand specificity. Affinity for fibroblast growth factors (FGFs) is increased by heparan sulfate glycosaminoglycans that function as coreceptors. Likewise, KLB increases the affinity for FGF19, FGF21 and FGF23. Interacts (phosphorylated on Tyr-766) with PLCG1 (via SH2 domains). Interacts with FRS2. Interacts (via C-terminus) with NEDD4 (via WW3 domain). Interacts with RPS6KA1. Interacts with KL. Interacts with SHB (via SH2 domain) and GRB10. Interacts with ANOS1; this interaction does not interfere with FGF2-binding to FGFR1, but prevents binding of heparin-bound FGF2. Interacts with SOX2 and SOX3. Interacts with FLRT1, FLRT2 and FLRT3. Found in a ternary complex with FGF1 and ITGAV:ITGB3. Autophosphorylated. Binding of FGF family members together with heparan sulfate proteoglycan or heparin promotes receptor dimerization and autophosphorylation on tyrosine residues. Autophosphorylation occurs in trans between the two FGFR molecules present in the dimer and proceeds in a highly ordered manner. Initial autophosphorylation at Tyr-653 increases the kinase activity by a factor of 50 to 100. After this, Tyr-583 becomes phosphorylated, followed by phosphorylation of Tyr-463, Tyr-766, Tyr-583 and Tyr-585. In a third stage, Tyr-654 is autophosphorylated, resulting in a further tenfold increase of kinase activity. Phosphotyrosine residues provide docking sites for interacting proteins and so are crucial for FGFR1 function and its regulation. Post-translationally, ubiquitinated. FGFR1 is rapidly ubiquitinated by NEDD4 after autophosphorylation, leading to internalization and lysosomal degradation. CBL is recruited to activated FGFR1 via FRS2 and GRB2, and mediates ubiquitination and subsequent degradation of FGFR1. In terms of processing, N-glycosylated in the endoplasmic reticulum. The N-glycan chains undergo further maturation to an Endo H-resistant form in the Golgi apparatus. Expressed in the parathyroid.

It localises to the cell membrane. The protein resides in the nucleus. Its subcellular location is the cytoplasm. It is found in the cytosol. The protein localises to the cytoplasmic vesicle. The enzyme catalyses L-tyrosyl-[protein] + ATP = O-phospho-L-tyrosyl-[protein] + ADP + H(+). Its activity is regulated as follows. Present in an inactive conformation in the absence of bound ligand. Ligand binding leads to dimerization and activation by sequential autophosphorylation on tyrosine residues. Tyrosine-protein kinase that acts as a cell-surface receptor for fibroblast growth factors and plays an essential role in the regulation of embryonic development, cell proliferation, differentiation and migration. Required for normal mesoderm patterning and correct axial organization during embryonic development, normal skeletogenesis and normal development of the gonadotropin-releasing hormone (GnRH) neuronal system. Phosphorylates PLCG1, FRS2, GAB1 and SHB. Ligand binding leads to the activation of several signaling cascades. Activation of PLCG1 leads to the production of the cellular signaling molecules diacylglycerol and inositol 1,4,5-trisphosphate. Phosphorylation of FRS2 triggers recruitment of GRB2, GAB1, PIK3R1 and SOS1, and mediates activation of RAS, MAPK1/ERK2, MAPK3/ERK1 and the MAP kinase signaling pathway, as well as of the AKT1 signaling pathway. Promotes phosphorylation of SHC1, STAT1 and PTPN11/SHP2. In the nucleus, enhances RPS6KA1 and CREB1 activity and contributes to the regulation of transcription. FGFR1 signaling is down-regulated by IL17RD/SEF, and by FGFR1 ubiquitination, internalization and degradation. The sequence is that of Fibroblast growth factor receptor 1 (Fgfr1) from Rattus norvegicus (Rat).